Here is a 760-residue protein sequence, read N- to C-terminus: 5-methyltetrahydropteroyltriglutamate--homocysteine methyltransferase (760 aa).

Residues Arg15–Lys18 and Lys114 contribute to the 5-methyltetrahydropteroyltri-L-glutamate site. Residues Ile436–Ser438 and Glu489 each bind L-homocysteine. Residues Ile436–Ser438 and Glu489 contribute to the L-methionine site. Residues Arg520–Cys521 and Trp566 each bind 5-methyltetrahydropteroyltri-L-glutamate. Asp604 is an L-homocysteine binding site. Asp604 contacts L-methionine. Residue Glu610 coordinates 5-methyltetrahydropteroyltri-L-glutamate. Residues His646, Cys648, and Glu670 each coordinate Zn(2+). Catalysis depends on His699, which acts as the Proton donor. Cys731 provides a ligand contact to Zn(2+).

Belongs to the vitamin-B12 independent methionine synthase family. Zn(2+) serves as cofactor.

It catalyses the reaction 5-methyltetrahydropteroyltri-L-glutamate + L-homocysteine = tetrahydropteroyltri-L-glutamate + L-methionine. It participates in amino-acid biosynthesis; L-methionine biosynthesis via de novo pathway; L-methionine from L-homocysteine (MetE route): step 1/1. Its function is as follows. Catalyzes the transfer of a methyl group from 5-methyltetrahydrofolate to homocysteine resulting in methionine formation. This Shewanella oneidensis (strain ATCC 700550 / JCM 31522 / CIP 106686 / LMG 19005 / NCIMB 14063 / MR-1) protein is 5-methyltetrahydropteroyltriglutamate--homocysteine methyltransferase.